The chain runs to 183 residues: UPF0397 protein PBPRA2239 (183 aa).

Helical transmembrane passes span 8 to 28 (VVLIAIGAALYGIGGLPMFGI), 41 to 61 (AVLALFSVLFGPLVGFLVGFI), 69 to 89 (FAGWGVWLTWVLGSGLVGLII), 110 to 130 (FALFVFLAFLGNVIGYGCSAY), and 147 to 167 (LIIIAAGNTLLIAIVGHYILT).

Belongs to the UPF0397 family.

The protein resides in the cell membrane. This chain is UPF0397 protein PBPRA2239, found in Photobacterium profundum (strain SS9).